We begin with the raw amino-acid sequence, 293 residues long: 4-diphosphocytidyl-2-C-methyl-D-erythritol kinase (293 aa).

Lys16 is a catalytic residue. 99 to 109 (PMGAGLGGGSS) serves as a coordination point for ATP. The active site involves Asp141.

It belongs to the GHMP kinase family. IspE subfamily.

The catalysed reaction is 4-CDP-2-C-methyl-D-erythritol + ATP = 4-CDP-2-C-methyl-D-erythritol 2-phosphate + ADP + H(+). Its pathway is isoprenoid biosynthesis; isopentenyl diphosphate biosynthesis via DXP pathway; isopentenyl diphosphate from 1-deoxy-D-xylulose 5-phosphate: step 3/6. In terms of biological role, catalyzes the phosphorylation of the position 2 hydroxy group of 4-diphosphocytidyl-2C-methyl-D-erythritol. The chain is 4-diphosphocytidyl-2-C-methyl-D-erythritol kinase from Burkholderia orbicola (strain MC0-3).